A 167-amino-acid polypeptide reads, in one-letter code: Insertion element IS1 2 protein InsB (167 aa).

It belongs to the transposase 27 family.

Its function is as follows. Absolutely required for transposition of IS1. The polypeptide is Insertion element IS1 2 protein InsB (insB2) (Escherichia coli (strain K12)).